The following is a 155-amino-acid chain: Urease accessory protein UreE (155 aa).

The protein belongs to the UreE family.

The protein localises to the cytoplasm. Involved in urease metallocenter assembly. Binds nickel. Probably functions as a nickel donor during metallocenter assembly. The protein is Urease accessory protein UreE of Synechococcus sp. (strain CC9311).